We begin with the raw amino-acid sequence, 166 residues long: Large ribosomal subunit protein uL10 (166 aa).

This sequence belongs to the universal ribosomal protein uL10 family. In terms of assembly, part of the ribosomal stalk of the 50S ribosomal subunit. The N-terminus interacts with L11 and the large rRNA to form the base of the stalk. The C-terminus forms an elongated spine to which L12 dimers bind in a sequential fashion forming a multimeric L10(L12)X complex.

Functionally, forms part of the ribosomal stalk, playing a central role in the interaction of the ribosome with GTP-bound translation factors. The polypeptide is Large ribosomal subunit protein uL10 (Pseudomonas fluorescens (strain SBW25)).